The following is a 1081-amino-acid chain: FHIP family protein GA25918 (1081 aa).

A compositionally biased stretch (polar residues) spans 1–11 (MSWLRSSPLRQ). Disordered stretches follow at residues 1–31 (MSWL…GSLR), 504–524 (ARPK…EQPI), 650–685 (ADEE…MGGG), 830–913 (NENS…AASS), and 933–1027 (NNNN…SEPA). Residue Ser-508 is modified to Phosphoserine. A compositionally biased stretch (low complexity) spans 657–668 (TDLTVTTTTASE). Phosphoserine is present on Ser-833. Positions 840 to 856 (QPQTTLSQQQQQQQGQQ) are enriched in low complexity. The span at 857–876 (RSAYATLSAATPVQATQTSA) shows a compositional bias: polar residues. Composition is skewed to low complexity over residues 891 to 913 (SKSI…AASS) and 933 to 953 (NNNN…GTGT). Residues 954–963 (CETSLSTNPQ) show a composition bias toward polar residues. Over residues 964–993 (SGAAAARSTGTATTANGNSSNSNISIGGST) the composition is skewed to low complexity. Residues 994–1010 (QTLSGHSNTTTYSSSTL) are compositionally biased toward polar residues.

The protein belongs to the FHIP family.

This chain is FHIP family protein GA25918, found in Drosophila pseudoobscura pseudoobscura (Fruit fly).